Reading from the N-terminus, the 406-residue chain is MFLNGFLRRLTRKIKQHGYAFFVVSVDGIATGVKGSVKGSFSVASLDPMVMENIEKCAILHNEDPHIAYPHEQPFALPRKGKAKSVKGFAKSMKGKAKENSKPKDILFPTFLDYSSQTAYIASILLNKYRIETFLLQNMAHLYRELIPCFDYDSWECVADALREKANEIFEANISRNLMLLILTGLYDNLVPHHQQEVFNKASNKFLKELEEKMDTSDPRVVIFLICLTMVLCAGGGFFSCKRHSNKKRSKASYTPPVPDNYAIFNDLGKYKAKVPVFEWQNAHAHSLGIMPLPPNLVNEMSSEEIKEAILEVPKEAAKGLVYGIPHFLIGSVVNSFTGVKYILMRVGTVVFFTIAGPFILLDYVKDRVREYYWFVTRNFSNFREFLFHAITSLLSLFPGGKMFQE.

It is found in the plastid. The protein resides in the chloroplast. This is an uncharacterized protein from Euglena gracilis.